The sequence spans 249 residues: DnaJ homolog subfamily C member 5 homolog (249 aa).

Ser12 is modified (phosphoserine). Thr13 carries the phosphothreonine modification. Phosphoserine is present on residues Ser14 and Ser17. One can recognise a J domain in the interval 15–84 (GDSLYEILGL…RNIYDNYGSL (70 aa)). The residue at position 19 (Tyr19) is a Phosphotyrosine. Residues 146–162 (HDQYSHLNRPDGNREGN) are compositionally biased toward basic and acidic residues. 2 disordered regions span residues 146–177 (HDQYSHLNRPDGNREGNDMPTHLGQPPRLEDV) and 218–249 (PFTGAPVAANENTSLNTTEQTTYTPDMVNQKY). Residues 227–241 (NENTSLNTTEQTTYT) are compositionally biased toward polar residues.

Fatty acylated. Heavily palmitoylated in the cysteine string motif. As to expression, expressed in wide range of synaptic terminals: embryonic nervous system, larval neuromuscular junctions, adult visual system (neuropil of optic ganglia and terminal of R1-8 photoreceptors) and thoracic neuromuscular junctions. Also expressed in non-neuronal cells: follicle cells, spermatheca, testis and ejaculatory bulb. Low level of expression is found in many neuronal and non-neuronal tissues.

Its subcellular location is the membrane. In terms of biological role, may have an important role in presynaptic function. The protein is DnaJ homolog subfamily C member 5 homolog of Drosophila melanogaster (Fruit fly).